A 539-amino-acid chain; its full sequence is CTP synthase (539 aa).

Residues 1–267 (MKEAKFIFVT…GTQVLEHFHL (267 aa)) are amidoligase domain. Ser-15 is a binding site for CTP. Residue Ser-15 coordinates UTP. ATP-binding positions include 16–21 (SLGKGL) and Asp-73. 2 residues coordinate Mg(2+): Asp-73 and Glu-141. CTP contacts are provided by residues 148–150 (DIE), 188–193 (KTKPTQ), and Lys-224. Residues 188–193 (KTKPTQ) and Lys-224 each bind UTP. Residues 292-536 (TVSIVGKYTE…IKAVVNKVKK (245 aa)) form the Glutamine amidotransferase type-1 domain. Gly-359 contributes to the L-glutamine binding site. Residue Cys-386 is the Nucleophile; for glutamine hydrolysis of the active site. L-glutamine contacts are provided by residues 387–390 (LGMQ), Glu-410, and Arg-464. Active-site residues include His-509 and Glu-511.

Belongs to the CTP synthase family. In terms of assembly, homotetramer.

The catalysed reaction is UTP + L-glutamine + ATP + H2O = CTP + L-glutamate + ADP + phosphate + 2 H(+). The enzyme catalyses L-glutamine + H2O = L-glutamate + NH4(+). It catalyses the reaction UTP + NH4(+) + ATP = CTP + ADP + phosphate + 2 H(+). It participates in pyrimidine metabolism; CTP biosynthesis via de novo pathway; CTP from UDP: step 2/2. Allosterically activated by GTP, when glutamine is the substrate; GTP has no effect on the reaction when ammonia is the substrate. The allosteric effector GTP functions by stabilizing the protein conformation that binds the tetrahedral intermediate(s) formed during glutamine hydrolysis. Inhibited by the product CTP, via allosteric rather than competitive inhibition. In terms of biological role, catalyzes the ATP-dependent amination of UTP to CTP with either L-glutamine or ammonia as the source of nitrogen. Regulates intracellular CTP levels through interactions with the four ribonucleotide triphosphates. In Wolbachia sp. subsp. Brugia malayi (strain TRS), this protein is CTP synthase.